Consider the following 275-residue polypeptide: Lectin (275 aa).

An N-terminal signal peptide occupies residues 1-30 (MASLQTQMISFYLIFLSILLTTIFFFKVNS). D-glucose is bound by residues aspartate 111 and glycine 129. Residues glutamate 149 and aspartate 151 each contribute to the Mn(2+) site. Ca(2+) contacts are provided by aspartate 151, phenylalanine 153, asparagine 155, and aspartate 159. The Mn(2+) site is built by aspartate 159 and histidine 166. A propeptide spanning residues 211–217 (NSLEEEN) is cleaved from the precursor. D-glucose contacts are provided by glycine 246 and alanine 247. Positions 270–275 (KQAADA) are excised as a propeptide.

Belongs to the leguminous lectin family. As to quaternary structure, heterotetramer of two alpha and two beta chains. Post-translationally, the mature form consists of two chains, alpha and beta, produced by cleavage of the immature protein. These remain cleaved, yet fold together to form one subunit.

Its function is as follows. D-mannose specific lectin. The chain is Lectin from Lens culinaris subsp. tomentosus (Lentil).